We begin with the raw amino-acid sequence, 1054 residues long: DIS3-like exonuclease 1 (1054 aa).

Residues 236-309 (AGIKSGRYIQ…PKNEWKGRTV (74 aa)) enclose the CSD1 domain. Residues 365–431 (ILVTPWDYRI…GEIATILVEN (67 aa)) form the CSD2 domain. The region spanning 465–816 (RKDLRKSHLV…VHRLLMAAIS (352 aa)) is the RNB domain. The residue at position 989 (Ser989) is a Phosphoserine.

The protein belongs to the RNR ribonuclease family. Component of the RNA exosome complex. The catalytically inactive RNA exosome core (Exo-9) complex is believed to associate with catalytic subunits EXOSC10, and DIS3 or DIS3L in cytoplasmic- and nuclear-specific RNA exosome complex forms. Mg(2+) is required as a cofactor.

It localises to the cytoplasm. The catalysed reaction is Exonucleolytic cleavage in the 3'- to 5'-direction to yield nucleoside 5'-phosphates.. Functionally, catalytic component of the RNA exosome complex which has 3'-&gt;5' exoribonuclease activity and participates in a multitude of cellular RNA processing and degradation events. In the cytoplasm, the RNA exosome complex is involved in general mRNA turnover and specifically degrades inherently unstable mRNAs containing AU-rich elements (AREs) within their 3' untranslated regions, and in RNA surveillance pathways, preventing translation of aberrant mRNAs. It seems to be involved in degradation of histone mRNA. This is DIS3-like exonuclease 1 (DIS3L) from Homo sapiens (Human).